We begin with the raw amino-acid sequence, 591 residues long: Aspartate--tRNA(Asp/Asn) ligase (591 aa).

Position 175 (E175) interacts with L-aspartate. Positions 199–202 (QQYK) are aspartate. Positions 221 and 450 each coordinate L-aspartate. 221-223 (RDE) is an ATP binding site. An ATP-binding site is contributed by E484. Position 491 (R491) interacts with L-aspartate. An ATP-binding site is contributed by 536 to 539 (GVDR).

Belongs to the class-II aminoacyl-tRNA synthetase family. Type 1 subfamily. In terms of assembly, homodimer.

The protein localises to the cytoplasm. The catalysed reaction is tRNA(Asx) + L-aspartate + ATP = L-aspartyl-tRNA(Asx) + AMP + diphosphate. Aspartyl-tRNA synthetase with relaxed tRNA specificity since it is able to aspartylate not only its cognate tRNA(Asp) but also tRNA(Asn). Reaction proceeds in two steps: L-aspartate is first activated by ATP to form Asp-AMP and then transferred to the acceptor end of tRNA(Asp/Asn). In Rhodopseudomonas palustris (strain TIE-1), this protein is Aspartate--tRNA(Asp/Asn) ligase.